We begin with the raw amino-acid sequence, 157 residues long: 2-C-methyl-D-erythritol 2,4-cyclodiphosphate synthase (157 aa).

A divalent metal cation-binding residues include aspartate 8 and histidine 10. 4-CDP-2-C-methyl-D-erythritol 2-phosphate contacts are provided by residues 8 to 10 (DVH) and 34 to 35 (HS). An a divalent metal cation-binding site is contributed by histidine 42. 4-CDP-2-C-methyl-D-erythritol 2-phosphate contacts are provided by residues 56 to 58 (DIG), 61 to 65 (FPDTD), 100 to 106 (AQAPKMA), 132 to 135 (TTTE), phenylalanine 139, and arginine 142.

This sequence belongs to the IspF family. In terms of assembly, homotrimer. The cofactor is a divalent metal cation.

The catalysed reaction is 4-CDP-2-C-methyl-D-erythritol 2-phosphate = 2-C-methyl-D-erythritol 2,4-cyclic diphosphate + CMP. Its pathway is isoprenoid biosynthesis; isopentenyl diphosphate biosynthesis via DXP pathway; isopentenyl diphosphate from 1-deoxy-D-xylulose 5-phosphate: step 4/6. Functionally, involved in the biosynthesis of isopentenyl diphosphate (IPP) and dimethylallyl diphosphate (DMAPP), two major building blocks of isoprenoid compounds. Catalyzes the conversion of 4-diphosphocytidyl-2-C-methyl-D-erythritol 2-phosphate (CDP-ME2P) to 2-C-methyl-D-erythritol 2,4-cyclodiphosphate (ME-CPP) with a corresponding release of cytidine 5-monophosphate (CMP). The protein is 2-C-methyl-D-erythritol 2,4-cyclodiphosphate synthase of Pseudomonas fluorescens (strain ATCC BAA-477 / NRRL B-23932 / Pf-5).